A 924-amino-acid polypeptide reads, in one-letter code: Isoleucine--tRNA ligase (924 aa).

Residues 58 to 68 (PYANGQIHVGH) carry the 'HIGH' region motif. Glutamate 561 contributes to the L-isoleucyl-5'-AMP binding site. The 'KMSKS' region signature appears at 602–606 (KMSKS). Lysine 605 contributes to the ATP binding site. Positions 887, 890, 907, and 910 each coordinate Zn(2+).

Belongs to the class-I aminoacyl-tRNA synthetase family. IleS type 1 subfamily. Monomer. It depends on Zn(2+) as a cofactor.

Its subcellular location is the cytoplasm. The enzyme catalyses tRNA(Ile) + L-isoleucine + ATP = L-isoleucyl-tRNA(Ile) + AMP + diphosphate. Functionally, catalyzes the attachment of isoleucine to tRNA(Ile). As IleRS can inadvertently accommodate and process structurally similar amino acids such as valine, to avoid such errors it has two additional distinct tRNA(Ile)-dependent editing activities. One activity is designated as 'pretransfer' editing and involves the hydrolysis of activated Val-AMP. The other activity is designated 'posttransfer' editing and involves deacylation of mischarged Val-tRNA(Ile). In Dichelobacter nodosus (strain VCS1703A), this protein is Isoleucine--tRNA ligase.